Here is a 139-residue protein sequence, read N- to C-terminus: Large ribosomal subunit protein uL16 (139 aa).

This sequence belongs to the universal ribosomal protein uL16 family. In terms of assembly, part of the 50S ribosomal subunit.

Its function is as follows. Binds 23S rRNA and is also seen to make contacts with the A and possibly P site tRNAs. The protein is Large ribosomal subunit protein uL16 of Chlorobium phaeobacteroides (strain DSM 266 / SMG 266 / 2430).